A 118-amino-acid polypeptide reads, in one-letter code: Small ribosomal subunit protein uS13 (118 aa).

The interval 96-118 is disordered; it reads PLRGQRTRTNARTRKGPRKAIKK.

Belongs to the universal ribosomal protein uS13 family. In terms of assembly, part of the 30S ribosomal subunit. Forms a loose heterodimer with protein S19. Forms two bridges to the 50S subunit in the 70S ribosome.

In terms of biological role, located at the top of the head of the 30S subunit, it contacts several helices of the 16S rRNA. In the 70S ribosome it contacts the 23S rRNA (bridge B1a) and protein L5 of the 50S subunit (bridge B1b), connecting the 2 subunits; these bridges are implicated in subunit movement. Contacts the tRNAs in the A and P-sites. In Stenotrophomonas maltophilia (strain K279a), this protein is Small ribosomal subunit protein uS13.